A 185-amino-acid polypeptide reads, in one-letter code: MGRYSVEPDNATKSCKARGSNLRVHFKNTRETAQAIKHMALRRAQRYLKNVIAKKEIVPFRRFNGGVGRKAQAKAFGCTQGRWPKKSAEFLWQLLRNAESNADYKGLDVDRLVIDHIQVNRAPKMRRRTYRAHGRINPYMSSPCHIEVILSEKEQVVAAPSPEEDAPKKKQSKKKMARQKLMQRD.

The tract at residues 157-185 (VAAPSPEEDAPKKKQSKKKMARQKLMQRD) is disordered. The segment covering 169–178 (KKQSKKKMAR) has biased composition (basic residues).

The protein belongs to the universal ribosomal protein uL22 family.

This is Large ribosomal subunit protein uL22 (RpL17) from Ixodes scapularis (Black-legged tick).